The sequence spans 581 residues: NADH-quinone oxidoreductase subunit C/D (581 aa).

Residues 1–172 (MSATDLVSEL…PLFNMTAALF (172 aa)) form an NADH dehydrogenase I subunit C region. Positions 196–581 (ELMILNYGPH…IDYVMSDVDR (386 aa)) are NADH dehydrogenase I subunit D.

The protein in the N-terminal section; belongs to the complex I 30 kDa subunit family. This sequence in the C-terminal section; belongs to the complex I 49 kDa subunit family. In terms of assembly, NDH-1 is composed of 13 different subunits. Subunits NuoB, CD, E, F, and G constitute the peripheral sector of the complex.

The protein localises to the cell inner membrane. The catalysed reaction is a quinone + NADH + 5 H(+)(in) = a quinol + NAD(+) + 4 H(+)(out). Functionally, NDH-1 shuttles electrons from NADH, via FMN and iron-sulfur (Fe-S) centers, to quinones in the respiratory chain. The immediate electron acceptor for the enzyme in this species is believed to be ubiquinone. Couples the redox reaction to proton translocation (for every two electrons transferred, four hydrogen ions are translocated across the cytoplasmic membrane), and thus conserves the redox energy in a proton gradient. The chain is NADH-quinone oxidoreductase subunit C/D from Rhodopseudomonas palustris (strain HaA2).